Reading from the N-terminus, the 491-residue chain is Immediate early protein IE1 (491 aa).

A compositionally biased stretch (basic and acidic residues) spans 1–11 (MESSAKRKMDP). A nuclear localization signal region spans residues 1–24 (MESSAKRKMDPDNPDEGPSSKVPR). The disordered stretch occupies residues 1–30 (MESSAKRKMDPDNPDEGPSSKVPRPETPVT). Residues 132-346 (ILDKVHEPFE…SVMKRRIEEI (215 aa)) are interaction with host PML, interference with PML sumoylation and disruption of PML-associated nuclear bodies. An interaction with host STAT2 region spans residues 373 to 445 (AIAEESDEEE…EEGAQEERED (73 aa)). The tract at residues 410-420 (ATIPLSSVIVA) is modulation of STAT3/STAT1 signaling. The segment at 410 to 445 (ATIPLSSVIVAENSDQEESEQSDEEEEEGAQEERED) is interaction with host STAT3. The segment at 421–472 (ENSDQEESEQSDEEEEEGAQEEREDTVSVKSEPVSEIEEVAPEEEEDGAEEP) is acidic. The interval 421–491 (ENSDQEESEQ…PMVTRSKADQ (71 aa)) is disordered. Over residues 423 to 444 (SDQEESEQSDEEEEEGAQEERE) the composition is skewed to acidic residues. Residues 449–452 (VKSE) are interaction with host SUMO1. Residue K450 forms a Glycyl lysine isopeptide (Lys-Gly) (interchain with G-Cter in SUMO) linkage. Over residues 455 to 470 (SEIEEVAPEEEEDGAE) the composition is skewed to acidic residues. Residues 475–491 (SGGKSTHPMVTRSKADQ) form a chromosome-tethering domain (CTD), binding to histones region.

Belongs to the HHV-5 IE1 protein family. As to quaternary structure, forms homodimers. Interacts with human p53/TP53; this interaction inhibits p53/TP53-dependent transactivation activity. Interacts with host STAT1. Interacts with host STAT2; this interaction promotes viral growth and counteracts the antiviral interferon response. May also interact with the host STAT1-STAT2 heterodimer. Interacts with host STAT3; this interaction leads to STAT3 nuclear accumulation and disruption of IL6-induced STAT3 phosphorylation. Interacts with host PML; this interaction inhibits host PML de novo sumoylation and probably inhibits PML regulation of type I and type II interferon-induced gene expression. Interacts with host DAXX. Interacts with host SP100. Interacts with host E2F1. Interacts with host RB1. Interacts with host HDAC1; this interaction inhibits histone deacetylation and promotes viral transcription. Interacts with host HDAC2; this interaction inhibits histone deacetylation and promotes viral transcription. Interacts with host HDAC3; this interaction inhibits histone deacetylation and promotes viral transcription. Interacts with host PLSCR1; this interaction inhibits IE1 transactivating activity. Sumoylated by host PML/nuclear domain 10. Sumoylation abolishes the interaction with host STAT2 and thus the IE1-mediated repression of interferon-stimulated genes.

It is found in the host nucleus. Plays an important role in transactivating viral early genes as well as activating its own promoter, probably by altering the viral chromatin structure. Expression of IE1 and IE2 proteins is critical for the establishment of lytic infection and reactivation from viral latency. Disrupts PML-associated ND10 nuclear bodies by interfering with host PML and SP100 sumoylation thereby altering the regulation of type I and type II interferon-induced gene expression. Promotes efficient viral growth by interacting with and directing host SP100 to degradation, leading to enhanced acetylation level of histones. In addition, functions in counteracting the host innate antiviral response. Inhibits the type I interferon pathway by directly interacting with and sequestrating host STAT2. Also targets type II interferon pathway by repressing IL6- and STAT3 target genes. Repression of STAT3 genes is due to STAT3 nuclear accumulation and disruption of IL6-induced STAT3 phosphorylation by IE1. This repression is followed by phosphorylation and activation of STAT1. Inhibits host ISG transcription by sequestering host ISGF3 in a PML- and STAT2- binding dependent manner. Alters host cell cycle progression, probably through its interaction with host E2F1 or RB1 that overcomes the RB1-mediated repression of E2F-responsive promoters. May act as a E3 ubiquitin ligase targeting several host proteins including HES1 and SP100A for ubiquitination and subsequent proteasomal degradation. Impairs the radial migration of immature neurons by downregulating Gap junction alpha-1 protein/GJA1 also via ubiquitination and degradation. In Human cytomegalovirus (strain Towne) (HHV-5), this protein is Immediate early protein IE1 (UL123).